A 1411-amino-acid polypeptide reads, in one-letter code: ATP-dependent permease PDR11 (1411 aa).

At 2–388 (SLSKYFNPIP…IGDRNYLISQ (387 aa)) the chain is on the cytoplasmic side. An ABC transporter 1 domain is found at 31–273 (VQNDEESASE…FHDTLQIKKN (243 aa)). The chain crosses the membrane as a helical span at residues 389–409 (FVSVVVQSLVIGSLFYNIPLT). Over 410–418 (TIGSFSRGS) the chain is Extracellular. A helical transmembrane segment spans residues 419–439 (LTFFSILFFTFLSLADMPASF). Topologically, residues 440–471 (QRQPVVRKHVQLHFYYNWVETLATNFFDCCSK) are cytoplasmic. Residues 472 to 492 (FILVVIFTIILYFLAHLQYNA) traverse the membrane as a helical segment. Residues 493 to 494 (AR) are Extracellular-facing. Residues 495–515 (FFIFLLFLSVYNFCMVSLFAL) form a helical membrane-spanning segment. Residues 516–524 (TALIAPTLS) lie on the Cytoplasmic side of the membrane. A helical membrane pass occupies residues 525 to 545 (MANLLAGILLLAIAMYASYVI). The Extracellular portion of the chain corresponds to 546–636 (YMKDMHPWFI…YTYHHVWRNF (91 aa)). N-linked (GlcNAc...) asparagine glycosylation occurs at Asn-595. Residues 637-657 (GIIIGFLCFFLFCSLLAAEYI) form a helical membrane-spanning segment. Over 658–1090 (TPLFTRENLL…QYICTKRDMT (433 aa)) the chain is Cytoplasmic. An ABC transporter 2 domain is found at 751-979 (ISWKNINYTI…FVAHDRRLTF (229 aa)). Residue 782–789 (GESGAGKT) coordinates ATP. Residues 1091 to 1111 (YVFAKYALNAGAGLFIGFSFW) form a helical membrane-spanning segment. At 1112–1117 (RTKHNI) the chain is on the extracellular side. A helical membrane pass occupies residues 1118-1138 (NGLQDAIFLCFMMLCVSSPLI). At 1139–1175 (NQVQDKALQSKEVYIAREARSNTYHWTVLLIAQTIVE) the chain is on the cytoplasmic side. Residues 1176–1196 (LPLAISSSTLFFLCCYFCCGF) traverse the membrane as a helical segment. Residues 1197–1204 (ETSARVAG) lie on the Extracellular side of the membrane. Residues 1205 to 1225 (VFYLNYILFSMYYLSFGLWLL) traverse the membrane as a helical segment. Residues 1226-1230 (YSAPD) lie on the Cytoplasmic side of the membrane. The chain crosses the membrane as a helical span at residues 1231–1251 (LQTAAVFVAFLYSFTASFCGV). Residues 1252 to 1355 (MQPYSLFPRF…NMSYHHRWRN (104 aa)) are Extracellular-facing. Residues Asn-1289, Asn-1324, and Asn-1346 are each glycosylated (N-linked (GlcNAc...) asparagine). Residues 1356-1376 (FGFEWVFVCFNIAAMFVGFYL) form a helical membrane-spanning segment. At 1377 to 1411 (TYIKKIWPSVIDGIKKCIPSMRRSKTSHNPNEQSV) the chain is on the cytoplasmic side.

The protein belongs to the ABC transporter superfamily. ABCG family. PDR (TC 3.A.1.205) subfamily.

Its subcellular location is the membrane. Transporter involved in the uptake of sterol. This is ATP-dependent permease PDR11 (PDR11) from Saccharomyces cerevisiae (strain ATCC 204508 / S288c) (Baker's yeast).